We begin with the raw amino-acid sequence, 309 residues long: Homoserine kinase (309 aa).

91–101 (PIGSGLGSSAC) is an ATP binding site.

The protein belongs to the GHMP kinase family. Homoserine kinase subfamily.

The protein localises to the cytoplasm. It carries out the reaction L-homoserine + ATP = O-phospho-L-homoserine + ADP + H(+). The protein operates within amino-acid biosynthesis; L-threonine biosynthesis; L-threonine from L-aspartate: step 4/5. Functionally, catalyzes the ATP-dependent phosphorylation of L-homoserine to L-homoserine phosphate. This chain is Homoserine kinase, found in Klebsiella pneumoniae (strain 342).